The primary structure comprises 23 residues: Magainin-BM2 (23 aa).

In terms of tissue distribution, expressed by the skin glands.

Its subcellular location is the secreted. Functionally, antimicrobial peptide. This Xenopus boumbaensis (Mawa clawed frog) protein is Magainin-BM2.